Reading from the N-terminus, the 336-residue chain is Fructose-1,6-bisphosphatase class 1 (336 aa).

4 residues coordinate Mg(2+): Glu-90, Asp-112, Leu-114, and Asp-115. Residues 115-118, Asn-211, and Lys-277 each bind substrate; that span reads DGSS. Residue Glu-283 coordinates Mg(2+).

The protein belongs to the FBPase class 1 family. As to quaternary structure, homotetramer. Mg(2+) serves as cofactor.

The protein resides in the cytoplasm. The enzyme catalyses beta-D-fructose 1,6-bisphosphate + H2O = beta-D-fructose 6-phosphate + phosphate. Its pathway is carbohydrate biosynthesis; gluconeogenesis. The chain is Fructose-1,6-bisphosphatase class 1 from Pseudomonas aeruginosa (strain UCBPP-PA14).